The chain runs to 107 residues: uncharacterized protein (107 aa).

A Glutaredoxin domain is found at 6 to 107 (KKVIEQILDN…QAQVETLLAA (102 aa)). Lys-23 contributes to the glutathione binding site. Cys-31 contributes to the [2Fe-2S] cluster binding site. Glutathione contacts are provided by residues Arg-60 and 85–86 (AD).

Belongs to the glutaredoxin family. Monothiol subfamily.

It is found in the plastid. The protein localises to the chloroplast. This is an uncharacterized protein from Porphyra purpurea (Red seaweed).